The sequence spans 283 residues: Acetyl-coenzyme A carboxylase carboxyl transferase subunit beta (283 aa).

The CoA carboxyltransferase N-terminal domain maps to 27-283; it reads VWVKCERCGE…LLDLHLRGEK (257 aa). C31, C34, C50, and C53 together coordinate Zn(2+). Residues 31 to 53 form a C4-type zinc finger; the sequence is CERCGEILFKKELDKNYKVCLKC.

It belongs to the AccD/PCCB family. As to quaternary structure, acetyl-CoA carboxylase is a heterohexamer composed of biotin carboxyl carrier protein (AccB), biotin carboxylase (AccC) and two subunits each of ACCase subunit alpha (AccA) and ACCase subunit beta (AccD). Requires Zn(2+) as cofactor.

It localises to the cytoplasm. It carries out the reaction N(6)-carboxybiotinyl-L-lysyl-[protein] + acetyl-CoA = N(6)-biotinyl-L-lysyl-[protein] + malonyl-CoA. Its pathway is lipid metabolism; malonyl-CoA biosynthesis; malonyl-CoA from acetyl-CoA: step 1/1. Its function is as follows. Component of the acetyl coenzyme A carboxylase (ACC) complex. Biotin carboxylase (BC) catalyzes the carboxylation of biotin on its carrier protein (BCCP) and then the CO(2) group is transferred by the transcarboxylase to acetyl-CoA to form malonyl-CoA. This is Acetyl-coenzyme A carboxylase carboxyl transferase subunit beta from Pelotomaculum thermopropionicum (strain DSM 13744 / JCM 10971 / SI).